Reading from the N-terminus, the 389-residue chain is tRNA-specific 2-thiouridylase MnmA (389 aa).

Residues 34 to 41 and L60 each bind ATP; that span reads AMSGGVDS. Residue C128 is the Nucleophile of the active site. A disulfide bridge links C128 with C225. Residue G152 participates in ATP binding. The interval 174–176 is interaction with tRNA; that stretch reads RDQ. Residue C225 is the Cysteine persulfide intermediate of the active site.

The protein belongs to the MnmA/TRMU family.

The protein resides in the cytoplasm. The enzyme catalyses S-sulfanyl-L-cysteinyl-[protein] + uridine(34) in tRNA + AH2 + ATP = 2-thiouridine(34) in tRNA + L-cysteinyl-[protein] + A + AMP + diphosphate + H(+). Functionally, catalyzes the 2-thiolation of uridine at the wobble position (U34) of tRNA, leading to the formation of s(2)U34. In Paracoccus denitrificans (strain Pd 1222), this protein is tRNA-specific 2-thiouridylase MnmA.